Consider the following 401-residue polypeptide: Dual-specificity RNA methyltransferase RlmN (401 aa).

Glu114 acts as the Proton acceptor in catalysis. A Radical SAM core domain is found at 120 to 365 (DKTRGTLCVS…TMVRRTRGDD (246 aa)). Cys127 and Cys370 form a disulfide bridge. [4Fe-4S] cluster contacts are provided by Cys134, Cys138, and Cys141. Residues 187 to 188 (GE), Ser219, 241 to 243 (SLH), and Asn327 each bind S-adenosyl-L-methionine. The active-site S-methylcysteine intermediate is Cys370.

The protein belongs to the radical SAM superfamily. RlmN family. The cofactor is [4Fe-4S] cluster.

The protein resides in the cytoplasm. The enzyme catalyses adenosine(2503) in 23S rRNA + 2 reduced [2Fe-2S]-[ferredoxin] + 2 S-adenosyl-L-methionine = 2-methyladenosine(2503) in 23S rRNA + 5'-deoxyadenosine + L-methionine + 2 oxidized [2Fe-2S]-[ferredoxin] + S-adenosyl-L-homocysteine. It catalyses the reaction adenosine(37) in tRNA + 2 reduced [2Fe-2S]-[ferredoxin] + 2 S-adenosyl-L-methionine = 2-methyladenosine(37) in tRNA + 5'-deoxyadenosine + L-methionine + 2 oxidized [2Fe-2S]-[ferredoxin] + S-adenosyl-L-homocysteine. Functionally, specifically methylates position 2 of adenine 2503 in 23S rRNA and position 2 of adenine 37 in tRNAs. m2A2503 modification seems to play a crucial role in the proofreading step occurring at the peptidyl transferase center and thus would serve to optimize ribosomal fidelity. The protein is Dual-specificity RNA methyltransferase RlmN of Stenotrophomonas maltophilia (strain K279a).